The primary structure comprises 501 residues: Actin nucleation-promoting factor WASL (501 aa).

N-acetylserine is present on Ser-2. The region spanning 31-138 (LGKKCVTMSS…KAVTDLLGRR (108 aa)) is the WH1 domain. Residues 135-158 (LGRRQRKSEKRRDAPNGPNLPMAT) form a disordered region. The CRIB domain maps to 200 to 213 (IGTPSNFQHIGHVG). Phosphoserine; by TNK2 is present on Ser-239. Tyr-253 carries the phosphotyrosine; by FAK1 and TNK2 modification. Disordered stretches follow at residues 263–403 (EAVK…GNKA) and 442–501 (QLKS…EWED). Residues 273–387 (APPPPPPSRG…PPGPPPPPGL (115 aa)) show a composition bias toward pro residues. At Arg-304 the chain carries Omega-N-methylarginine. WH2 domains are found at residues 401–418 (NKAA…LKKV) and 429–446 (GRDA…LKSV). A compositionally biased stretch (polar residues) spans 442-453 (QLKSVSDGQEST). Residues Ser-480 and Ser-481 each carry the phosphoserine modification. Positions 482 to 501 (DEDEDDDDEEDFEDDDEWED) are enriched in acidic residues.

Binds actin and the Arp2/3 complex. Interacts with CDC42. Interacts with FCHSD1. Interacts with FCHSD2. Binds to SH3 domains of GRB2. Interacts with the C-terminal SH3 domain of DNMBP. Interacts with SNX9. Interacts with the WW domains of PRPF40A/FBP11. Interacts with PTK2/FAK1. Interacts with PACSIN1, PACSIN2 and PACSIN3. Interacts with NOSTRIN. Binds to TNK2. Interacts with SNX33. Interacts with NONO (via second RRM domain); the interaction is direct. Component of a multiprotein complex with NONO and SFPQ; associates with the complex via direct interaction with NONO. Phosphorylation at Ser-239, Tyr-253, Ser-480 and Ser-481 enhances actin polymerization activity.

It localises to the cytoplasm. The protein resides in the cytoskeleton. Its subcellular location is the nucleus. Regulates actin polymerization by stimulating the actin-nucleating activity of the Arp2/3 complex. Involved in various processes, such as mitosis and cytokinesis, via its role in the regulation of actin polymerization. Together with CDC42, involved in the extension and maintenance of the formation of thin, actin-rich surface projections called filopodia. In addition to its role in the cytoplasm, also plays a role in the nucleus by regulating gene transcription, probably by promoting nuclear actin polymerization. Binds to HSF1/HSTF1 and forms a complex on heat shock promoter elements (HSE) that negatively regulates HSP90 expression. Plays a role in dendrite spine morphogenesis. This Mus musculus (Mouse) protein is Actin nucleation-promoting factor WASL (Wasl).